Here is a 516-residue protein sequence, read N- to C-terminus: Leucine-rich repeat transmembrane neuronal protein 2 (516 aa).

The N-terminal stretch at 1–33 (MGLHFKWPLGAPMLAAIYAMSMVLKMLPALGMA) is a signal peptide. An LRRNT domain is found at 34 to 61 (CPPKCRCEKLLFYCDSQGFHSVPNATDK). Topologically, residues 34-422 (CPPKCRCEKL…EPDNAIFTQR (389 aa)) are extracellular. Asparagine 57 carries N-linked (GlcNAc...) asparagine glycosylation. LRR repeat units lie at residues 63-83 (SLGL…QFAS), 86-107 (QLTW…AFQG), 110-131 (KLKE…TFTQ), 134-155 (NLQN…LFYG), 158-179 (KLQT…LFWD), 182-203 (SLEF…GFAG), 206-227 (KLRE…HFLR), 230-251 (SLHT…MEWT), 254-275 (TLEK…VFET), and 278-299 (NLKI…ILNS). A glycan (N-linked (GlcNAc...) asparagine) is linked at asparagine 126. Asparagine 243 is a glycosylation site (N-linked (GlcNAc...) asparagine). One can recognise an LRRCT domain in the interval 311 to 362 (NLWECSARICALASWLGSFQGRWEHSILCHSPDHTQGEDILDAVHGFQLCWN). Residue asparagine 362 is glycosylated (N-linked (GlcNAc...) asparagine). A helical transmembrane segment spans residues 423-443 (VITGTMALLFSFFFIIFIVFI). Residues 444–516 (SRKCCPPTLR…QQLPYKECEV (73 aa)) lie on the Cytoplasmic side of the membrane. The Involved in DLG4-binding motif lies at 513-516 (ECEV).

Belongs to the LRRTM family. As to quaternary structure, interacts with DLG4. Interacts with neurexin NRXN1; interaction is mediated by heparan sulfate glycan modification on neurexin. As to expression, expressed in neuronal tissues.

Its subcellular location is the cell membrane. The protein localises to the postsynaptic cell membrane. In terms of biological role, involved in the development and maintenance of excitatory synapses in the vertebrate nervous system. Regulates surface expression of AMPA receptors and instructs the development of functional glutamate release sites. Acts as a ligand for the presynaptic receptors NRXN1-A and NRXN1-B. The protein is Leucine-rich repeat transmembrane neuronal protein 2 (LRRTM2) of Homo sapiens (Human).